Reading from the N-terminus, the 1252-residue chain is MSCTASYAGMTTPVKDKEGHGIPCLQPIDVVECTYQYFTKSRNKLSLRVGDLIYVLTKGSNGWWDGVLIRHSANNNNNSLILDRGWFPPSFTRSILNELHGVPDIGNELEIFQAGLNLKLELSSNPVILSLEDFLDCCRDIEFKEQLAWSPTPVHERKGCCELLYYNQDLDVYCRTLPYLPQNQVETVNDYSSFPAISKIAGKKMPITSSPDLFYLNDCDVVYWYDLTRLVCHYVNLTERDLLANEREKFLTSLDLLTAQITCVYMLFRNLRLVEDSFKKTLKKLIYTLSRFSINANIWFHSTPFEEREAIASQKDPERRSPLLQSILGTFQKFHFLLRLLHFLSNPNELTILPQLTPRFFKDSFNTISWNNPFLRKHLNQHMSHDLPRQMIKAVAGASGIVAENNDEIPASKQGTSCSSETSHHSPSAPFQRRRRGTIFSNVPGSSDESDTIWSKRKKPYPLNEETLSLVRARKEQLDAKLKQMIKSANEYLSNTANFSKMLNFEMNFKTYEEVSGTIPIIDILENLDLTIYLNLRELGDENRVFDEDVAIDDEDKEFLKHSLSSLSYILSDYFNMKQYFHDVVVKFIIVAQHLTLEDPFVFSPMQNDLPTGYYEPMKPSSLNLDNAKDKKNGSQNTDIQEEEDEYEPDPDSLILFHNLINQDSDFNDLKFFNLAHVFKKSCDDYFDVLKLSIEFVNRLILERENLLNYAARMMKNNITELLLRGEEGYGSYDGGETAEKSDTNAVYADSDTKDNDEWRDSQVKLPRYLQREYDSELIWGSNNRIKGGSKHALISYLTDNEKKDLFFNITFLITFRSIFTTTEFLSYLISQYNLDPPEDLCFEEYNEWVTKKLIPVKCRVVEIMTTFFKQYWFPGYDEPDLATLNLDYFAQVAIKENITGSVELLKEVNQKFKHGNMQEATAPMKTLDQQICQEHYWGTLYSTTESILAVDPVLFATQLTILEHEIYCEITIFDCLQKIWKNKYTKSYGASPGLNEFISFANKLTNFISYSIVKEADKSKRAKLLSHFIFIAEYCRKFNNFSSMTAIISALYSSSIYRLEKTWQAVIPQTRDLLQSLDKLMDPKKNFINYRSELKSLHSAPCVPFFGVYLSDLTFTDSGNPDYLVLEHGLKGVHDEKKYINFNKRSRLVDILQEIIYFKKTHYDFTKDRTVIECISNSLENIPHIEKQYQLSLIIEPKPRKKVVPNSNSNNKSQEKSRDDQTDEGKTSTKKDRFSKFQLHKTKKKAPKVSK.

Residues 26–97 (QPIDVVECTY…PPSFTRSILN (72 aa)) form the SH3 domain. 2 disordered regions span residues 409 to 454 (IPAS…DTIW) and 623 to 648 (LNLDNAKDKKNGSQNTDIQEEEDEYE). Low complexity predominate over residues 416 to 428 (TSCSSETSHHSPS). The region spanning 782–914 (SNNRIKGGSK…LLKEVNQKFK (133 aa)) is the N-terminal Ras-GEF domain. Residues 952-1199 (DPVLFATQLT…YQLSLIIEPK (248 aa)) form the Ras-GEF domain. Residues 1201–1252 (RKKVVPNSNSNNKSQEKSRDDQTDEGKTSTKKDRFSKFQLHKTKKKAPKVSK) form a disordered region. Over residues 1214–1236 (SQEKSRDDQTDEGKTSTKKDRFS) the composition is skewed to basic and acidic residues. Positions 1239-1252 (QLHKTKKKAPKVSK) are enriched in basic residues.

Promotes the exchange of Ras-bound GDP by GTP. This is Guanine nucleotide exchange factor SDC25 (SDC25) from Saccharomyces cerevisiae (strain YJM789) (Baker's yeast).